Reading from the N-terminus, the 474-residue chain is Protein CyaE (474 aa).

The signal sequence occupies residues 1–31 (MAAVQVRRRGRALALALWAGFALSVGGGVRA).

It belongs to the outer membrane factor (OMF) (TC 1.B.17) family.

It is found in the cell outer membrane. In terms of biological role, cyaE is necessary for transport of calmodulin-sensitive adenylate cyclase-hemolysin (cyclolysin). The sequence is that of Protein CyaE (cyaE) from Bordetella pertussis (strain Tohama I / ATCC BAA-589 / NCTC 13251).